The sequence spans 324 residues: NADH-ubiquinone oxidoreductase chain 1 (324 aa).

A run of 8 helical transmembrane segments spans residues 10-30 (MIMTLSYMIPILIAVAFLTLV), 76-96 (FLFILTPILALLLALTIWTPL), 107-127 (LGLLFLLAMSSLTVYSLLWSG), 143-163 (VAQTISYEVTLAIILLSTIML), 178-198 (PMYLIFSSWPLTMMWYISTLA), 229-249 (LFFLAEYANIMLMNTLTITLF), 260-280 (ELFSITLATKVLLLSSSFLWI), and 300-320 (FLPLTLAMCLWHTSMPISYAG).

Belongs to the complex I subunit 1 family.

It localises to the mitochondrion inner membrane. It catalyses the reaction a ubiquinone + NADH + 5 H(+)(in) = a ubiquinol + NAD(+) + 4 H(+)(out). Functionally, core subunit of the mitochondrial membrane respiratory chain NADH dehydrogenase (Complex I) that is believed to belong to the minimal assembly required for catalysis. Complex I functions in the transfer of electrons from NADH to the respiratory chain. The immediate electron acceptor for the enzyme is believed to be ubiquinone. This chain is NADH-ubiquinone oxidoreductase chain 1 (MT-ND1), found in Coturnix japonica (Japanese quail).